We begin with the raw amino-acid sequence, 252 residues long: Trans-aconitate 2-methyltransferase (252 aa).

This sequence belongs to the methyltransferase superfamily. Tam family.

It localises to the cytoplasm. It carries out the reaction trans-aconitate + S-adenosyl-L-methionine = (E)-3-(methoxycarbonyl)pent-2-enedioate + S-adenosyl-L-homocysteine. Its function is as follows. Catalyzes the S-adenosylmethionine monomethyl esterification of trans-aconitate. The polypeptide is Trans-aconitate 2-methyltransferase (Escherichia coli O7:K1 (strain IAI39 / ExPEC)).